A 394-amino-acid polypeptide reads, in one-letter code: Elongation factor Tu (394 aa).

The region spanning 10 to 204 (KPHVNIGTIG…AVDSYIPQPV (195 aa)) is the tr-type G domain. A G1 region spans residues 19 to 26 (GHVDHGKT). 19 to 26 (GHVDHGKT) serves as a coordination point for GTP. Threonine 26 contributes to the Mg(2+) binding site. A G2 region spans residues 60-64 (GITIS). Residues 81 to 84 (DCPG) form a G3 region. GTP-binding positions include 81–85 (DCPGH) and 136–139 (NKID). The tract at residues 136–139 (NKID) is G4. The G5 stretch occupies residues 174–176 (SAL).

The protein belongs to the TRAFAC class translation factor GTPase superfamily. Classic translation factor GTPase family. EF-Tu/EF-1A subfamily. As to quaternary structure, monomer.

The protein localises to the cytoplasm. It carries out the reaction GTP + H2O = GDP + phosphate + H(+). GTP hydrolase that promotes the GTP-dependent binding of aminoacyl-tRNA to the A-site of ribosomes during protein biosynthesis. The chain is Elongation factor Tu from Rickettsia conorii (strain ATCC VR-613 / Malish 7).